The sequence spans 233 residues: Probable chemoreceptor glutamine deamidase CheD (233 aa).

This sequence belongs to the CheD family.

The catalysed reaction is L-glutaminyl-[protein] + H2O = L-glutamyl-[protein] + NH4(+). Probably deamidates glutamine residues to glutamate on methyl-accepting chemotaxis receptors (MCPs), playing an important role in chemotaxis. This is Probable chemoreceptor glutamine deamidase CheD from Vibrio cholerae serotype O1 (strain ATCC 39315 / El Tor Inaba N16961).